The following is a 1355-amino-acid chain: Transcription factor MAR1 (1355 aa).

Residues 23–52 (CTICRKRKVKCDKTRPHCNQCTKTGVAHLC) constitute a DNA-binding region (zn(2)-C6 fungal-type). Disordered stretches follow at residues 586-614 (TTDN…KDTN), 918-942 (SVPS…LNQD), and 1221-1253 (PPIS…TSSL). Residues 589–603 (NTRSGPPSNSNRNGS) are compositionally biased toward low complexity. Polar residues predominate over residues 604–614 (ETPSVSPKDTN). Residues 918–927 (SVPSSCNSSS) are compositionally biased toward low complexity. Over residues 1225-1238 (SAKNNMAWGTTPES) the composition is skewed to polar residues.

It localises to the nucleus. Its function is as follows. Transcription factor that contributes to plasma membrane sphingolipid incorporation and membrane permeability, decreasing fluconazole accumulation. Regulates 337 genes under fluconazole stress, including several related to lipid biosynthesis pathways such as RSB1, encoding a sphingoid long-chain base efflux transporter. Associates with the promoter of RSB1 in the region containing two 5'-CCCCTCC-3' motifs and increases its promoter occupancy upon fluconazole stress. The protein is Transcription factor MAR1 of Candida glabrata (strain ATCC 2001 / BCRC 20586 / JCM 3761 / NBRC 0622 / NRRL Y-65 / CBS 138) (Yeast).